The primary structure comprises 436 residues: MASLPIFDSVSRFLPLTNEDEQFWWRLTGQHMARMMHEAGYPEDRQVECLLFHRFKVVPCLGPRPHSDIPWYKSRVGGGAADGCPINYSWRFGTADRKPHIRNFIEPLGTLTNTPADRLNEVATKALLQDYAMTLPNVDLELFWTFAPHYRPRIIEKADMEKLAGASLLVGAEMSPDSRTIDIKAYMYPRVPSQTSQLLTTILPQAMRDAYGEDVCLDSLNLVRDFMTSDPQGSQLTLTGTTGIDCCKLQDTRVKIYVITRNTSFDHISAIMTLGGRRPISKELLSQLQTLWYELKGAPAELPSSEQLPAQTKPDGSKNPIVVPFYFDIQPRLALPDVKAYIDVSTSPVSDLAAAKAVVRHLEHHGSGQNPQAYLNVLQDITPVEELETQKGALAFYSVAVKKNELDITSYFNPQVYKRYFAHEVQLNGQRRSAFE.

This sequence belongs to the tryptophan dimethylallyltransferase family.

It participates in secondary metabolite biosynthesis. Prenyltransferase; part of the gene cluster that mediates the biosynthesis of neosartoricin B, a prenylated anthracenone that probably exhibits T-cell antiproliferative activity, suggestive of a physiological role as an immunosuppressive agent. The non-reducing polyketide synthase nscA probably synthesizes and cyclizes the decaketide backbone. The hydrolase nscB then mediates the product release through hydrolysis followed by spontaneous decarboxylation. The prenyltransferase nscD catalyzes the addition of the dimethylallyl group to the aromatic C5. The FAD-dependent monooxygenase nscC is then responsible for the stereospecific hydroxylation at C2. Neosartoricin B can be converted into two additional compounds neosartoricins C and D. Neosartoricin C is a spirocyclic compound that is cyclized through the attack of C3 hydroxyl on C14, followed by dehydration. On the other hand, neosartoricin D is a further cyclized compound in which attack of C2 on C14 in neosartoricin C results in the formation of the acetal-containing dioxabicyclo-octanone ring. Both of these compounds are novel and possibly represent related metabolites of the gene cluster. The polypeptide is Prenyltransferase nscD (Arthroderma gypseum (strain ATCC MYA-4604 / CBS 118893) (Microsporum gypseum)).